A 180-amino-acid polypeptide reads, in one-letter code: Pro-glucagon (180 aa).

The signal sequence occupies residues 1 to 20 (MKSIYFVAGLFVMLVQGSWQ). Residues 26 to 56 (TEEKSRSFSAPQTEPLNDLDQMNEDKRHSQG) form a disordered region. Ser-54 carries the phosphoserine modification. The propeptide occupies 84-89 (NKNNIA). Ser-105 and Ser-108 each carry phosphoserine. Arg-127 carries the arginine amide modification. The propeptide occupies 131 to 145 (DFPEEVAIVEEFRRR). Residues Ser-150 and Ser-152 each carry the phosphoserine modification.

It belongs to the glucagon family. In terms of processing, proglucagon is post-translationally processed in a tissue-specific manner in pancreatic A cells and intestinal L cells. In pancreatic A cells, the major bioactive hormone is glucagon cleaved by PCSK2/PC2. In the intestinal L cells PCSK1/PC1 liberates GLP-1, GLP-2, glicentin and oxyntomodulin. GLP-1 is further N-terminally truncated by post-translational processing in the intestinal L cells resulting in GLP-1(7-37) GLP-1-(7-36)amide. The C-terminal amidation is neither important for the metabolism of GLP-1 nor for its effects on the endocrine pancreas. In terms of tissue distribution, glucagon is secreted in the A cells of the islets of Langerhans. GLP-1, GLP-2, oxyntomodulin and glicentin are secreted from enteroendocrine cells throughout the gastrointestinal tract. GLP-1 and GLP-2 are also secreted in selected neurons in the brain.

It is found in the secreted. Functionally, plays a key role in glucose metabolism and homeostasis. Regulates blood glucose by increasing gluconeogenesis and decreasing glycolysis. A counterregulatory hormone of insulin, raises plasma glucose levels in response to insulin-induced hypoglycemia. Plays an important role in initiating and maintaining hyperglycemic conditions in diabetes. Its function is as follows. Potent stimulator of glucose-dependent insulin release. Also stimulates insulin release in response to IL6. Plays important roles on gastric motility and the suppression of plasma glucagon levels. May be involved in the suppression of satiety and stimulation of glucose disposal in peripheral tissues, independent of the actions of insulin. Has growth-promoting activities on intestinal epithelium. May also regulate the hypothalamic pituitary axis (HPA) via effects on LH, TSH, CRH, oxytocin, and vasopressin secretion. Increases islet mass through stimulation of islet neogenesis and pancreatic beta cell proliferation. Inhibits beta cell apoptosis. In terms of biological role, stimulates intestinal growth and up-regulates villus height in the small intestine, concomitant with increased crypt cell proliferation and decreased enterocyte apoptosis. The gastrointestinal tract, from the stomach to the colon is the principal target for GLP-2 action. Plays a key role in nutrient homeostasis, enhancing nutrient assimilation through enhanced gastrointestinal function, as well as increasing nutrient disposal. Stimulates intestinal glucose transport and decreases mucosal permeability. Significantly reduces food intake. Inhibits gastric emptying in humans. Suppression of gastric emptying may lead to increased gastric distension, which may contribute to satiety by causing a sensation of fullness. Functionally, may modulate gastric acid secretion and the gastro-pyloro-duodenal activity. May play an important role in intestinal mucosal growth in the early period of life. This Canis lupus familiaris (Dog) protein is Pro-glucagon (GCG).